Consider the following 224-residue polypeptide: Heme response regulator HssR (224 aa).

A Response regulatory domain is found at 3-116 (TCLIVDDDPK…ELMFRIKAVL (114 aa)). Position 52 is a 4-aspartylphosphate (Asp52). The ompR/PhoB-type DNA-binding region spans 124–222 (NNEVSIGNLT…VRGLGYKVDD (99 aa)).

Phosphorylated by HssS.

The protein localises to the cytoplasm. Member of the two-component regulatory system HssS/HssR involved in intracellular heme homeostasis and tempering of staphylococcal virulence. Phosphorylated HssR binds to a direct repeat sequence within hrtAB promoter and activates the expression of hrtAB, an efflux pump, in response to extracellular heme, hemin, hemoglobin or blood. This chain is Heme response regulator HssR (hssR), found in Staphylococcus saprophyticus subsp. saprophyticus (strain ATCC 15305 / DSM 20229 / NCIMB 8711 / NCTC 7292 / S-41).